A 117-amino-acid polypeptide reads, in one-letter code: Large ribosomal subunit protein uL18 (117 aa).

The protein belongs to the universal ribosomal protein uL18 family. As to quaternary structure, part of the 50S ribosomal subunit; part of the 5S rRNA/L5/L18/L25 subcomplex. Contacts the 5S and 23S rRNAs.

This is one of the proteins that bind and probably mediate the attachment of the 5S RNA into the large ribosomal subunit, where it forms part of the central protuberance. The chain is Large ribosomal subunit protein uL18 from Halorhodospira halophila (strain DSM 244 / SL1) (Ectothiorhodospira halophila (strain DSM 244 / SL1)).